Here is a 142-residue protein sequence, read N- to C-terminus: Large ribosomal subunit protein uL13 (142 aa).

The protein belongs to the universal ribosomal protein uL13 family. As to quaternary structure, part of the 50S ribosomal subunit.

In terms of biological role, this protein is one of the early assembly proteins of the 50S ribosomal subunit, although it is not seen to bind rRNA by itself. It is important during the early stages of 50S assembly. The protein is Large ribosomal subunit protein uL13 of Opitutus terrae (strain DSM 11246 / JCM 15787 / PB90-1).